Here is a 335-residue protein sequence, read N- to C-terminus: DNA-directed RNA polymerase subunit alpha (335 aa).

Positions 1-233 (MVREKIRVST…DLLIPFLHAE (233 aa)) are alpha N-terminal domain (alpha-NTD). The tract at residues 263-335 (KKKIALKFIF…HFVIDLKNKR (73 aa)) is alpha C-terminal domain (alpha-CTD).

This sequence belongs to the RNA polymerase alpha chain family. In terms of assembly, in plastids the minimal PEP RNA polymerase catalytic core is composed of four subunits: alpha, beta, beta', and beta''. When a (nuclear-encoded) sigma factor is associated with the core the holoenzyme is formed, which can initiate transcription.

The protein localises to the plastid. It localises to the chloroplast. It carries out the reaction RNA(n) + a ribonucleoside 5'-triphosphate = RNA(n+1) + diphosphate. Its function is as follows. DNA-dependent RNA polymerase catalyzes the transcription of DNA into RNA using the four ribonucleoside triphosphates as substrates. In Spinacia oleracea (Spinach), this protein is DNA-directed RNA polymerase subunit alpha.